The chain runs to 157 residues: MAKKPETLSRIADNKKAAFNYFFEERHEAGMVLHGWEVKALREGKVQLTDGYVVIREGELYLIGCQINPLKTASTHVSPDAVRTKKLLLHKDEIKRLTAKVEQKGYTLVPLNLHWTNGRAKCEIALAKGKAEHDKRDTIKEREGKREVERAMKSRHR.

Residues glutamate 132–arginine 157 form a disordered region.

It belongs to the SmpB family.

The protein resides in the cytoplasm. Required for rescue of stalled ribosomes mediated by trans-translation. Binds to transfer-messenger RNA (tmRNA), required for stable association of tmRNA with ribosomes. tmRNA and SmpB together mimic tRNA shape, replacing the anticodon stem-loop with SmpB. tmRNA is encoded by the ssrA gene; the 2 termini fold to resemble tRNA(Ala) and it encodes a 'tag peptide', a short internal open reading frame. During trans-translation Ala-aminoacylated tmRNA acts like a tRNA, entering the A-site of stalled ribosomes, displacing the stalled mRNA. The ribosome then switches to translate the ORF on the tmRNA; the nascent peptide is terminated with the 'tag peptide' encoded by the tmRNA and targeted for degradation. The ribosome is freed to recommence translation, which seems to be the essential function of trans-translation. This Paracidovorax citrulli (strain AAC00-1) (Acidovorax citrulli) protein is SsrA-binding protein.